We begin with the raw amino-acid sequence, 232 residues long: Clarin-1 (232 aa).

A helical membrane pass occupies residues 8–28; that stretch reads IIFCMAGVLSFLCALGVVTAV. Asn48 carries N-linked (GlcNAc...) asparagine glycosylation. The next 2 membrane-spanning stretches (helical) occupy residues 101–121 and 135–155; these read IILF…FFMY and LGLY…MILF. N-linked (GlcNAc...) asparagine glycosylation occurs at Asn184. A helical membrane pass occupies residues 186–206; that stretch reads TTSFWVVFICFFVHFLNGLLI.

The protein belongs to the clarin family.

The protein resides in the cell membrane. Functionally, may have a role in the excitatory ribbon synapse junctions between hair cells and cochlear ganglion cells and presumably also in analogous synapses within the retina. This is Clarin-1 (Clrn1) from Mus musculus (Mouse).